The sequence spans 64 residues: Large ribosomal subunit protein bL35c (64 aa).

Belongs to the bacterial ribosomal protein bL35 family.

The protein resides in the plastid. It is found in the chloroplast. This chain is Large ribosomal subunit protein bL35c, found in Phaeodactylum tricornutum (strain CCAP 1055/1).